The chain runs to 637 residues: Probable serine/threonine-protein kinase DDB_G0283065 (637 aa).

2 disordered regions span residues 36–88 (NNNN…KFNR) and 155–234 (NSNN…RFNN). Residues 53–85 (NNSTTKSIDNNNNNTNNSNSNNNNNDNIKNNNK) show a composition bias toward low complexity. Residues 236–629 (FNDVRVLGKG…NQISTDYDNF (394 aa)) form the Protein kinase domain. ATP contacts are provided by residues 242–250 (LGKGGFGIV) and K265. Catalysis depends on D479, which acts as the Proton acceptor.

The protein belongs to the protein kinase superfamily. Ser/Thr protein kinase family. GCN2 subfamily.

The enzyme catalyses L-seryl-[protein] + ATP = O-phospho-L-seryl-[protein] + ADP + H(+). It catalyses the reaction L-threonyl-[protein] + ATP = O-phospho-L-threonyl-[protein] + ADP + H(+). The sequence is that of Probable serine/threonine-protein kinase DDB_G0283065 from Dictyostelium discoideum (Social amoeba).